Reading from the N-terminus, the 83-residue chain is Carboxysome shell vertex protein CsoS4A (83 aa).

The BMV domain occupies 1 to 78 (MKIMQVEKTL…SDLTIIGIID (78 aa)).

Belongs to the CcmL/EutN family. CsoS4 subfamily. In terms of assembly, homopentamer.

It localises to the carboxysome. In terms of biological role, probably forms vertices in the carboxysome, a polyhedral inclusion where RuBisCO (ribulose bisphosphate carboxylase, cbbL-cbbS) is sequestered. Has been modeled to induce curvature upon insertion into an otherwise flat hexagonal layer of major carboxysome subunits. A minor shell protein, only 12 pentamers of CsoS4A/CsoS4B are calculated to be present in each carboxysome. The 2 CsoS4 proteins contribute to the impermeability of the carboxysome to CO(2). Its function is as follows. Unlike beta-carboxysomes, alpha-carboxysomes (Cb) can form without cargo protein. CsoS2 is essential for Cb formation and is also capable of targeting foreign proteins to the Cb. The Cb shell assembles with the aid of CsoS2; CsoS1A, CsoS1B and CsoS1C form the majority of the shell while CsoS4A and CsoS4B form vertices. CsoS1D forms pseudohexamers that probably control metabolite flux into and out of the shell. The sequence is that of Carboxysome shell vertex protein CsoS4A from Halothiobacillus neapolitanus (strain ATCC 23641 / c2) (Thiobacillus neapolitanus).